The sequence spans 91 residues: SCSRKGPKFVEYKYMAGSAQYCEHKNMKFMIGSNFIDFDDCTRCTCYNHGLQCCGIGANAGVFGVPGCEAVNDHCELVFLKKNTDQLCFIN.

5 disulfide bridges follow: Cys2–Cys54, Cys22–Cys46, Cys41–Cys75, Cys44–Cys53, and Cys68–Cys88.

Expressed in ciliated epithelium of nidamental gland and in secretory-like cells in accessory nidamental gland (at protein level). Expressed in ovary, nidamental gland and accessory nidamental gland.

The protein localises to the secreted. Functionally, acts as a pheromone. Triggers aggressive behaviors in males such as fin beating, lunging and grabbing. These behaviors form part of the competition for fertile females. The chain is Beta-microseminoprotein from Doryteuthis pealeii (Longfin inshore squid).